Consider the following 154-residue polypeptide: Crossover junction endodeoxyribonuclease RuvC (154 aa).

Active-site residues include Asp-7, Glu-66, and Asp-139. Asp-7, Glu-66, and Asp-139 together coordinate Mg(2+).

This sequence belongs to the RuvC family. As to quaternary structure, homodimer which binds Holliday junction (HJ) DNA. The HJ becomes 2-fold symmetrical on binding to RuvC with unstacked arms; it has a different conformation from HJ DNA in complex with RuvA. In the full resolvosome a probable DNA-RuvA(4)-RuvB(12)-RuvC(2) complex forms which resolves the HJ. Mg(2+) serves as cofactor.

The protein localises to the cytoplasm. It catalyses the reaction Endonucleolytic cleavage at a junction such as a reciprocal single-stranded crossover between two homologous DNA duplexes (Holliday junction).. Functionally, the RuvA-RuvB-RuvC complex processes Holliday junction (HJ) DNA during genetic recombination and DNA repair. Endonuclease that resolves HJ intermediates. Cleaves cruciform DNA by making single-stranded nicks across the HJ at symmetrical positions within the homologous arms, yielding a 5'-phosphate and a 3'-hydroxyl group; requires a central core of homology in the junction. The consensus cleavage sequence is 5'-(A/T)TT(C/G)-3'. Cleavage occurs on the 3'-side of the TT dinucleotide at the point of strand exchange. HJ branch migration catalyzed by RuvA-RuvB allows RuvC to scan DNA until it finds its consensus sequence, where it cleaves and resolves the cruciform DNA. In Aliarcobacter butzleri (strain RM4018) (Arcobacter butzleri), this protein is Crossover junction endodeoxyribonuclease RuvC.